The following is a 446-amino-acid chain: T-box transcription factor TBX19 (446 aa).

The segment at residues 43–216 is a DNA-binding region (T-box); it reads LEDAPLWQRF…YNPFAKAFLD (174 aa).

The protein localises to the nucleus. In terms of biological role, transcriptional regulator involved in developmental processes. Can activate POMC gene expression and repress the alpha glycoprotein subunit and thyroid-stimulating hormone beta promoters. The chain is T-box transcription factor TBX19 from Mus musculus (Mouse).